The primary structure comprises 602 residues: Protein SHORT-ROOT 1 (602 aa).

Residues 12-55 are compositionally biased toward low complexity; sequence AASEQQQQQQQSASYNSRSTTSSGSRSSSHQTNASYSYYHHSSN. 3 disordered regions span residues 12–69, 101–145, and 165–185; these read AASE…YYYG, DFSS…TAAG, and DFSS…AVGG. Over residues 56–68 the composition is skewed to gly residues; that stretch reads SGGGGGGGGGYYY. Residues 122-145 are compositionally biased toward low complexity; it reads PPASSTPTGTAPTPPLSTSSTAAG. Over residues 173–185 the composition is skewed to gly residues; it reads SGGGTASSGAVGG. The 419-residue stretch at 183 to 601 folds into the GRAS domain; that stretch reads VGGGGGGRWA…QPLVWASAWR (419 aa). The tract at residues 190–253 is leucine repeat I (LRI); the sequence is RWASQLLLEC…LTASGPRTLR (64 aa). The VHIID stretch occupies residues 272–349; sequence ALRFQELSPW…PHLSITTVVS (78 aa). A VHIID motif is present at residues 311 to 315; it reads FHILD. Positions 365–401 are leucine repeat II (LRII); that stretch reads EIGQRMEKFARLMGVPFRFRAVHHSGDLAELDLDALD. Residues 411–517 are PFYRE; sequence LAVNCVNSLR…ERGAGRAIVD (107 aa). Residues 520-601 are SAW; the sequence is SCPASESMER…QPLVWASAWR (82 aa).

It belongs to the GRAS family. Interacts with SCR1. Interacts with SMOS1. Expressed in leaves and roots. Detected in the stele, the endodermis and part of the cortex.

It localises to the nucleus. In terms of biological role, transcription factor required for the asymmetric cell division involved in radial pattern formation in roots. Essential for both cell division and cell specification. The sequence is that of Protein SHORT-ROOT 1 from Oryza sativa subsp. japonica (Rice).